The following is a 415-amino-acid chain: Esterase FrsA (415 aa).

Belongs to the FrsA family.

It catalyses the reaction a carboxylic ester + H2O = an alcohol + a carboxylate + H(+). Catalyzes the hydrolysis of esters. This is Esterase FrsA from Yersinia pseudotuberculosis serotype O:1b (strain IP 31758).